A 554-amino-acid polypeptide reads, in one-letter code: Glucose-6-phosphate isomerase (554 aa).

Glu-359 serves as the catalytic Proton donor. Residues His-390 and Lys-518 contribute to the active site.

It belongs to the GPI family.

The protein resides in the cytoplasm. The catalysed reaction is alpha-D-glucose 6-phosphate = beta-D-fructose 6-phosphate. The protein operates within carbohydrate biosynthesis; gluconeogenesis. It functions in the pathway carbohydrate degradation; glycolysis; D-glyceraldehyde 3-phosphate and glycerone phosphate from D-glucose: step 2/4. Catalyzes the reversible isomerization of glucose-6-phosphate to fructose-6-phosphate. The protein is Glucose-6-phosphate isomerase of Pseudomonas fluorescens.